A 258-amino-acid chain; its full sequence is MQDWDPDLYRQFEAERTRPATDLLAHITITSPQFISDLGCGPGNSTELLHRRFPDAQLVGIDHSQAMLASAQQRLPHCTFIEADIHQWRPSQPQNLIYANASLQWLTDHPHLFPSLLSQLAPRGVLAVQMPDNLDQPSHRAMREVAENGPWQQTLQEAGATRAKVLSANHYYDLLAPHAERVDIWRTTYYHPMPSAQAIVDWLRATGLRPYLAPLTEAMQLAFLQNYLAIIDKAYPARTDGRRLLAFPRLFIVAHAQR.

Belongs to the methyltransferase superfamily. Tam family.

The protein resides in the cytoplasm. It carries out the reaction trans-aconitate + S-adenosyl-L-methionine = (E)-3-(methoxycarbonyl)pent-2-enedioate + S-adenosyl-L-homocysteine. In terms of biological role, catalyzes the S-adenosylmethionine monomethyl esterification of trans-aconitate. In Yersinia pestis bv. Antiqua (strain Antiqua), this protein is Trans-aconitate 2-methyltransferase.